We begin with the raw amino-acid sequence, 354 residues long: Uroporphyrinogen decarboxylase (354 aa).

Residues 25–29, F44, D75, Y152, T207, and H330 each bind substrate; that span reads RQAGR.

This sequence belongs to the uroporphyrinogen decarboxylase family. In terms of assembly, homodimer.

It localises to the cytoplasm. It carries out the reaction uroporphyrinogen III + 4 H(+) = coproporphyrinogen III + 4 CO2. The protein operates within porphyrin-containing compound metabolism; protoporphyrin-IX biosynthesis; coproporphyrinogen-III from 5-aminolevulinate: step 4/4. Catalyzes the decarboxylation of four acetate groups of uroporphyrinogen-III to yield coproporphyrinogen-III. This is Uroporphyrinogen decarboxylase from Xanthomonas axonopodis pv. citri (strain 306).